We begin with the raw amino-acid sequence, 406 residues long: Putative nickel insertion protein (406 aa).

It belongs to the LarC family.

This Thermomicrobium roseum (strain ATCC 27502 / DSM 5159 / P-2) protein is Putative nickel insertion protein.